The sequence spans 270 residues: Hairy and enhancer of split-related protein helt (270 aa).

The segment at 1–24 is disordered; that stretch reads MNARALYKRPPPVSSSQSEASGKR. The bHLH domain maps to 59-114; that stretch reads KTPVSHKVIEKRRRDRINRCLNELGKTVPMALAKQNSGKLEKAEILEMTVQYLRAL. In terms of domain architecture, Orange spans 136 to 171; sequence FHYGYHECMKNLVHYLTTVERMETKDTKYARILAFL.

Belongs to the HEY family.

It localises to the nucleus. Functionally, transcriptional repressor which binds preferentially to the canonical E box sequence 5'-CACGCG-3'. In Danio rerio (Zebrafish), this protein is Hairy and enhancer of split-related protein helt (helt).